A 189-amino-acid chain; its full sequence is Putative nucleotidase BC_3386 (189 aa).

This sequence belongs to the 5'(3')-deoxyribonucleotidase family.

In Bacillus cereus (strain ATCC 14579 / DSM 31 / CCUG 7414 / JCM 2152 / NBRC 15305 / NCIMB 9373 / NCTC 2599 / NRRL B-3711), this protein is Putative nucleotidase BC_3386.